The following is a 404-amino-acid chain: Nicotinate phosphoribosyltransferase (404 aa).

Phosphohistidine; by autocatalysis is present on H225.

The protein belongs to the NAPRTase family. In terms of processing, transiently phosphorylated on a His residue during the reaction cycle. Phosphorylation strongly increases the affinity for substrates and increases the rate of nicotinate D-ribonucleotide production. Dephosphorylation regenerates the low-affinity form of the enzyme, leading to product release.

The catalysed reaction is nicotinate + 5-phospho-alpha-D-ribose 1-diphosphate + ATP + H2O = nicotinate beta-D-ribonucleotide + ADP + phosphate + diphosphate. It functions in the pathway cofactor biosynthesis; NAD(+) biosynthesis; nicotinate D-ribonucleotide from nicotinate: step 1/1. In terms of biological role, catalyzes the synthesis of beta-nicotinate D-ribonucleotide from nicotinate and 5-phospho-D-ribose 1-phosphate at the expense of ATP. This is Nicotinate phosphoribosyltransferase from Acinetobacter baumannii (strain ATCC 17978 / DSM 105126 / CIP 53.77 / LMG 1025 / NCDC KC755 / 5377).